Consider the following 94-residue polypeptide: MVYISNGQVLDSRNQSPWRLSFITDFFWGIAEFVVFFFKTLLQQDVKKRRGYGGSSDSRYDDGRGPPGNPPRRMGRISHLRGPSPPPMAGGUGR.

The chain crosses the membrane as a helical span at residues 20-42 (LSFITDFFWGIAEFVVFFFKTLL). Residues 48–94 (KRRGYGGSSDSRYDDGRGPPGNPPRRMGRISHLRGPSPPPMAGGUGR) are disordered. Position 92 (Sec92) is a non-standard amino acid, selenocysteine.

Belongs to the selenoprotein K family. Interacts with DERL1, DERL2, DERL3 and SELENOS. The SELENOK-SELENOS complex interacts with VCP. Interacts with ZDHHC6. Cleaved by CAPN2/m-calpain in resting macrophages but not in activated macrophages. Macrophage activation up-regulates expression of the calpain inhibitor CAST/calpastatin, resulting in inhibition of CAPN2 activity. Post-translationally, truncated SELENOK proteins produced by failed UGA/Sec decoding are ubiquitinated by the CRL2(KLHDC2) complex, which recognizes the diglycine (Gly-Gly) at the C-terminus of truncated SELENOK proteins.

The protein localises to the endoplasmic reticulum membrane. The protein resides in the cell membrane. Functionally, required for Ca(2+) flux in immune cells and plays a role in T-cell proliferation and in T-cell and neutrophil migration. Involved in endoplasmic reticulum-associated degradation (ERAD) of soluble glycosylated proteins. Required for palmitoylation and cell surface expression of CD36 and involved in macrophage uptake of low-density lipoprotein and in foam cell formation. Together with ZDHHC6, required for palmitoylation of ITPR1 in immune cells, leading to regulate ITPR1 stability and function. Plays a role in protection of cells from ER stress-induced apoptosis. Protects cells from oxidative stress when overexpressed in cardiomyocytes. This is Selenoprotein K from Rattus norvegicus (Rat).